We begin with the raw amino-acid sequence, 523 residues long: Cyclin-dependent kinase 17 (523 aa).

The residue at position 9 (Ser9) is a Phosphoserine. The tract at residues 30–55 (TIEENSSKDNEPIVKNGRPPTSHSMH) is disordered. Residues Ser80, Ser92, and Ser105 each carry the phosphoserine modification. The segment at 103–123 (MGSDGESDQASGTSSDEVQSP) is disordered. Over residues 110–123 (DQASGTSSDEVQSP) the composition is skewed to polar residues. Phosphoserine occurs at positions 137, 146, 165, and 180. A Protein kinase domain is found at 192-473 (YIKLEKLGEG…AEEAMKHVYF (282 aa)). Residues 198 to 206 (LGEGTYATV) and Lys221 each bind ATP. Asp313 (proton acceptor) is an active-site residue. Residues 501–523 (PGFRNSSYPETGHGKNRRQSMLF) form a disordered region. Residues 514 to 523 (GKNRRQSMLF) are compositionally biased toward basic residues.

Belongs to the protein kinase superfamily. CMGC Ser/Thr protein kinase family. CDC2/CDKX subfamily. In terms of assembly, found in a complex containing CABLES1, CDK16 and TDRD7. Interacts with TDRD7.

The enzyme catalyses L-seryl-[protein] + ATP = O-phospho-L-seryl-[protein] + ADP + H(+). It carries out the reaction L-threonyl-[protein] + ATP = O-phospho-L-threonyl-[protein] + ADP + H(+). Its function is as follows. May play a role in terminally differentiated neurons. Has a Ser/Thr-phosphorylating activity for histone H1. This is Cyclin-dependent kinase 17 (CDK17) from Homo sapiens (Human).